A 188-amino-acid polypeptide reads, in one-letter code: Large ribosomal subunit protein uL5 (188 aa).

This sequence belongs to the universal ribosomal protein uL5 family. In terms of assembly, part of the 50S ribosomal subunit; contacts the 5S rRNA and probably tRNA. Forms a bridge to the 30S subunit in the 70S ribosome.

This is one of the proteins that bind and probably mediate the attachment of the 5S RNA into the large ribosomal subunit, where it forms part of the central protuberance. In the 70S ribosome it contacts protein S13 of the 30S subunit (bridge B1b), connecting the 2 subunits; this bridge is implicated in subunit movement. May contact the P site tRNA; the 5S rRNA and some of its associated proteins might help stabilize positioning of ribosome-bound tRNAs. The protein is Large ribosomal subunit protein uL5 of Pyrococcus horikoshii (strain ATCC 700860 / DSM 12428 / JCM 9974 / NBRC 100139 / OT-3).